The chain runs to 291 residues: B3 domain-containing protein At2g16210 (291 aa).

Residues 19-114 (FFKVVQSINV…HFTVNIFKLD (96 aa)) constitute a DNA-binding region (TF-B3 1). Polar residues predominate over residues 149–159 (VSSNRGQTTAA). The tract at residues 149–182 (VSSNRGQTTAAESKGRKLNLGKRAAKESQSSKRT) is disordered. Basic and acidic residues predominate over residues 172 to 182 (AAKESQSSKRT). A DNA-binding region (TF-B3 2) is located at residues 200-291 (AAAFTILFKQ…KELLLVVSKP (92 aa)).

The protein resides in the nucleus. This Arabidopsis thaliana (Mouse-ear cress) protein is B3 domain-containing protein At2g16210.